Consider the following 206-residue polypeptide: Probable glutathione S-transferase 6 (206 aa).

The GST N-terminal domain maps to 2-79 (VHYKLVYFPL…YLAREFGIAG (78 aa)). Glutathione is bound by residues tyrosine 8, tryptophan 39, lysine 43, 49 to 51 (GQL), and 63 to 64 (QS). A GST C-terminal domain is found at 81-206 (NDTEAAEVDA…YIANRPDYPF (126 aa)).

It belongs to the GST superfamily. Sigma family.

The enzyme catalyses RX + glutathione = an S-substituted glutathione + a halide anion + H(+). In terms of biological role, conjugation of reduced glutathione to a wide number of exogenous and endogenous hydrophobic electrophiles. The sequence is that of Probable glutathione S-transferase 6 (gst-6) from Caenorhabditis elegans.